The sequence spans 386 residues: Methionine aminotransferase (386 aa).

Lys-236 is modified (N6-(pyridoxal phosphate)lysine).

The protein belongs to the class-I pyridoxal-phosphate-dependent aminotransferase family. Homodimer. Pyridoxal 5'-phosphate serves as cofactor.

The protein resides in the cytoplasm. It catalyses the reaction a 2-oxocarboxylate + L-methionine = 4-methylsulfanyl-2-oxobutanoate + an L-alpha-amino acid. In terms of biological role, shows aminotransferase activity with methionine and histidine as substrates, and to a lesser extent also with phenylalanine. This is Methionine aminotransferase (ybdL) from Escherichia coli (strain K12).